Here is a 197-residue protein sequence, read N- to C-terminus: Large ribosomal subunit protein uL5 (197 aa).

The protein belongs to the universal ribosomal protein uL5 family. In terms of assembly, part of the 50S ribosomal subunit; contacts the 5S rRNA and probably tRNA. Forms a bridge to the 30S subunit in the 70S ribosome.

This is one of the proteins that bind and probably mediate the attachment of the 5S RNA into the large ribosomal subunit, where it forms part of the central protuberance. In the 70S ribosome it contacts protein S13 of the 30S subunit (bridge B1b), connecting the 2 subunits; this bridge is implicated in subunit movement. May contact the P site tRNA; the 5S rRNA and some of its associated proteins might help stabilize positioning of ribosome-bound tRNAs. The protein is Large ribosomal subunit protein uL5 of Caldivirga maquilingensis (strain ATCC 700844 / DSM 13496 / JCM 10307 / IC-167).